Reading from the N-terminus, the 328-residue chain is Phosphate acyltransferase (328 aa).

It belongs to the PlsX family. In terms of assembly, homodimer. Probably interacts with PlsY.

Its subcellular location is the cytoplasm. The enzyme catalyses a fatty acyl-[ACP] + phosphate = an acyl phosphate + holo-[ACP]. It participates in lipid metabolism; phospholipid metabolism. In terms of biological role, catalyzes the reversible formation of acyl-phosphate (acyl-PO(4)) from acyl-[acyl-carrier-protein] (acyl-ACP). This enzyme utilizes acyl-ACP as fatty acyl donor, but not acyl-CoA. The sequence is that of Phosphate acyltransferase from Staphylococcus aureus (strain bovine RF122 / ET3-1).